The following is a 493-amino-acid chain: Acetylcholine receptor subunit epsilon (493 aa).

The first 20 residues, 1-20 (MARAPLGVLLLLGLLGRGVG), serve as a signal peptide directing secretion. Residues 21-239 (KNEELRLYHH…VIYSLIIRRK (219 aa)) are Extracellular-facing. N-linked (GlcNAc...) asparagine glycans are attached at residues Asn86 and Asn161. Cys148 and Cys162 are joined by a disulfide. A helical membrane pass occupies residues 240–264 (PLFYVINIIVPCVLISGLVLLAYFL). The Cytoplasmic portion of the chain corresponds to 265–272 (PAQAGGQK). A helical membrane pass occupies residues 273-291 (CTVSINVLLAQTVFLFLIA). Topologically, residues 292–306 (QKIPETSLSVPLLGR) are extracellular. The helical transmembrane segment at 307 to 328 (FLIFVMVVATLIVMNCVIVLNV) threads the bilayer. The Cytoplasmic portion of the chain corresponds to 329-456 (SQRTPTTHAM…WVRMGNALDN (128 aa)). The helical transmembrane segment at 457-480 (ICFWAALVLFSVGSSLIFLGAYFN) threads the bilayer. Topologically, residues 481–493 (RVPDLPYAPCIQP) are extracellular.

It belongs to the ligand-gated ion channel (TC 1.A.9) family. Acetylcholine receptor (TC 1.A.9.1) subfamily. Epsilon/CHRNE sub-subfamily. In terms of assembly, pentamer of two alpha chains, and one each of the beta, delta, and gamma (in immature muscle) or epsilon (in mature muscle) chains. The muscle heteropentamer composed of alpha-1, beta-1, delta, epsilon subunits interacts with the alpha-conotoxin ImII.

It is found in the postsynaptic cell membrane. The protein resides in the cell membrane. It catalyses the reaction K(+)(in) = K(+)(out). It carries out the reaction Na(+)(in) = Na(+)(out). After binding acetylcholine, the AChR responds by an extensive change in conformation that affects all subunits and leads to opening of an ion-conducting channel across the plasma membrane. The chain is Acetylcholine receptor subunit epsilon from Homo sapiens (Human).